The chain runs to 525 residues: Bifunctional purine biosynthesis protein PurH (525 aa).

The MGS-like domain maps to 1–145 (MSNVERALIS…KNNASVGIVT (145 aa)).

The protein belongs to the PurH family.

The enzyme catalyses (6R)-10-formyltetrahydrofolate + 5-amino-1-(5-phospho-beta-D-ribosyl)imidazole-4-carboxamide = 5-formamido-1-(5-phospho-D-ribosyl)imidazole-4-carboxamide + (6S)-5,6,7,8-tetrahydrofolate. It catalyses the reaction IMP + H2O = 5-formamido-1-(5-phospho-D-ribosyl)imidazole-4-carboxamide. It functions in the pathway purine metabolism; IMP biosynthesis via de novo pathway; 5-formamido-1-(5-phospho-D-ribosyl)imidazole-4-carboxamide from 5-amino-1-(5-phospho-D-ribosyl)imidazole-4-carboxamide (10-formyl THF route): step 1/1. The protein operates within purine metabolism; IMP biosynthesis via de novo pathway; IMP from 5-formamido-1-(5-phospho-D-ribosyl)imidazole-4-carboxamide: step 1/1. The sequence is that of Bifunctional purine biosynthesis protein PurH from Alcanivorax borkumensis (strain ATCC 700651 / DSM 11573 / NCIMB 13689 / SK2).